Reading from the N-terminus, the 615-residue chain is tRNA uridine 5-carboxymethylaminomethyl modification enzyme MnmG (615 aa).

11-16 provides a ligand contact to FAD; sequence GLGHAG. Residue 278 to 292 coordinates NAD(+); it reads GPRYCPSLEDKVVRF.

Belongs to the MnmG family. Homodimer. Heterotetramer of two MnmE and two MnmG subunits. The cofactor is FAD.

It is found in the cytoplasm. In terms of biological role, NAD-binding protein involved in the addition of a carboxymethylaminomethyl (cmnm) group at the wobble position (U34) of certain tRNAs, forming tRNA-cmnm(5)s(2)U34. The polypeptide is tRNA uridine 5-carboxymethylaminomethyl modification enzyme MnmG (Myxococcus xanthus (strain DK1622)).